We begin with the raw amino-acid sequence, 454 residues long: NADP-specific glutamate dehydrogenase (454 aa).

At serine 2 the chain carries N-acetylserine. Residue lysine 114 is part of the active site.

This sequence belongs to the Glu/Leu/Phe/Val dehydrogenases family. As to quaternary structure, homohexamer.

It carries out the reaction L-glutamate + NADP(+) + H2O = 2-oxoglutarate + NH4(+) + NADPH + H(+). In Neurospora intermedia, this protein is NADP-specific glutamate dehydrogenase (GDH).